A 232-amino-acid polypeptide reads, in one-letter code: Large ribosomal subunit protein uL1 (232 aa).

The protein belongs to the universal ribosomal protein uL1 family. As to quaternary structure, part of the 50S ribosomal subunit.

Its function is as follows. Binds directly to 23S rRNA. The L1 stalk is quite mobile in the ribosome, and is involved in E site tRNA release. Functionally, protein L1 is also a translational repressor protein, it controls the translation of the L11 operon by binding to its mRNA. The sequence is that of Large ribosomal subunit protein uL1 from Maricaulis maris (strain MCS10) (Caulobacter maris).